The primary structure comprises 765 residues: Probable serine/threonine-protein kinase DDB_G0271402 (765 aa).

The Protein kinase domain occupies 35–328 (LEFGQEIGKG…KEITERLKSL (294 aa)). Residues 41–49 (IGKGAYGKI) and Lys62 contribute to the ATP site. Asp192 (proton acceptor) is an active-site residue. Disordered stretches follow at residues 371–393 (IVHN…NNSN), 443–477 (SMGD…KIIN), 491–527 (SSDL…NNNS), 545–620 (PIQI…QQYQ), 654–684 (PLNI…HHHL), 699–738 (IISS…PTNI), and 746–765 (ASNS…TVQS). Residues 446-458 (DESDLDSDDEDDS) are compositionally biased toward acidic residues. Composition is skewed to low complexity over residues 459–470 (YTSSASSSRCNS), 499–527 (NGNN…NNNS), 562–605 (PPTS…PKSN), 662–678 (NNNN…GNVN), and 699–720 (IISS…SLTS).

The protein belongs to the protein kinase superfamily. TKL Ser/Thr protein kinase family.

It carries out the reaction L-seryl-[protein] + ATP = O-phospho-L-seryl-[protein] + ADP + H(+). The enzyme catalyses L-threonyl-[protein] + ATP = O-phospho-L-threonyl-[protein] + ADP + H(+). The polypeptide is Probable serine/threonine-protein kinase DDB_G0271402 (Dictyostelium discoideum (Social amoeba)).